The primary structure comprises 78 residues: Large ribosomal subunit protein uL24 (78 aa).

The protein belongs to the universal ribosomal protein uL24 family. In terms of assembly, part of the 50S ribosomal subunit.

Functionally, one of two assembly initiator proteins, it binds directly to the 5'-end of the 23S rRNA, where it nucleates assembly of the 50S subunit. One of the proteins that surrounds the polypeptide exit tunnel on the outside of the subunit. The protein is Large ribosomal subunit protein uL24 of Helicobacter hepaticus (strain ATCC 51449 / 3B1).